The sequence spans 120 residues: Protein Wnt-9 (120 aa).

Residue serine 1 is the site of O-palmitoleoyl serine; by PORCN attachment. Cysteine 90 and cysteine 101 are oxidised to a cystine.

The protein belongs to the Wnt family. In terms of processing, palmitoleoylation is required for efficient binding to frizzled receptors. Depalmitoleoylation leads to Wnt signaling pathway inhibition.

The protein resides in the secreted. It localises to the extracellular space. The protein localises to the extracellular matrix. Its function is as follows. Ligand for members of the frizzled family of seven transmembrane receptors. Probable developmental protein. May be a signaling molecule which affects the development of discrete regions of tissues. Is likely to signal over only few cell diameters. This is Protein Wnt-9 (WNT-9) from Alopias vulpinus (Common thresher shark).